The following is a 133-amino-acid chain: Small ribosomal subunit protein uS8 (133 aa).

It belongs to the universal ribosomal protein uS8 family. In terms of assembly, part of the 30S ribosomal subunit. Contacts proteins S5 and S12.

In terms of biological role, one of the primary rRNA binding proteins, it binds directly to 16S rRNA central domain where it helps coordinate assembly of the platform of the 30S subunit. This Thermosynechococcus vestitus (strain NIES-2133 / IAM M-273 / BP-1) protein is Small ribosomal subunit protein uS8.